Here is a 422-residue protein sequence, read N- to C-terminus: Putidaredoxin reductase CamA (422 aa).

Ala15, Asp37, Lys50, Val83, and Arg134 together coordinate FAD. 156–165 lines the NAD(+) pocket; sequence GGGYIGLEVA. Asp284 and Val302 together coordinate FAD.

Belongs to the FAD-dependent oxidoreductase family. Homodimer or monomer. FAD serves as cofactor.

It carries out the reaction 2 reduced [2Fe-2S]-[putidaredoxin] + NAD(+) + H(+) = 2 oxidized [2Fe-2S]-[putidaredoxin] + NADH. Its pathway is terpene metabolism; (R)-camphor degradation. The oxidation of camphor by cytochrome P450-CAM CamC requires the participation of the flavoprotein, putidaredoxin reductase CamA, and the iron-sulfur protein, putidaredoxin CamB, to mediate the transfer of electrons from NADH to P450 for oxygen activation. This chain is Putidaredoxin reductase CamA, found in Pseudomonas putida (Arthrobacter siderocapsulatus).